The following is an 86-amino-acid chain: MARVTIEDCLDNVDNRFELVLVASKRARQLAKGIAEPLVDVDNDKPTVLALREIAAGKITRDILNQPEHNFATSSLDLALSGDHSF.

It belongs to the RNA polymerase subunit omega family. The RNAP catalytic core consists of 2 alpha, 1 beta, 1 beta' and 1 omega subunit. When a sigma factor is associated with the core the holoenzyme is formed, which can initiate transcription.

The enzyme catalyses RNA(n) + a ribonucleoside 5'-triphosphate = RNA(n+1) + diphosphate. In terms of biological role, promotes RNA polymerase assembly. Latches the N- and C-terminal regions of the beta' subunit thereby facilitating its interaction with the beta and alpha subunits. The protein is DNA-directed RNA polymerase subunit omega of Psychrobacter arcticus (strain DSM 17307 / VKM B-2377 / 273-4).